A 274-amino-acid polypeptide reads, in one-letter code: Large ribosomal subunit protein uL2 (274 aa).

2 disordered regions span residues 28–55 (APHA…RHVG) and 224–274 (VAMN…RRRK). The span at 263 to 274 (KRTDKMIVRRRK) shows a compositional bias: basic and acidic residues.

Belongs to the universal ribosomal protein uL2 family. Part of the 50S ribosomal subunit. Forms a bridge to the 30S subunit in the 70S ribosome.

Functionally, one of the primary rRNA binding proteins. Required for association of the 30S and 50S subunits to form the 70S ribosome, for tRNA binding and peptide bond formation. It has been suggested to have peptidyltransferase activity; this is somewhat controversial. Makes several contacts with the 16S rRNA in the 70S ribosome. This is Large ribosomal subunit protein uL2 from Pseudomonas fluorescens (strain ATCC BAA-477 / NRRL B-23932 / Pf-5).